Reading from the N-terminus, the 503-residue chain is UDP-N-acetylmuramate--L-alanine ligase (503 aa).

A disordered region spans residues 1–22 (MIKQTHVSNSSNNSTNSTAAQV). Residues 8 to 18 (SNSSNNSTNST) are compositionally biased toward low complexity. 135–141 (GTHGKTT) contributes to the ATP binding site.

Belongs to the MurCDEF family.

The protein localises to the cytoplasm. The catalysed reaction is UDP-N-acetyl-alpha-D-muramate + L-alanine + ATP = UDP-N-acetyl-alpha-D-muramoyl-L-alanine + ADP + phosphate + H(+). It functions in the pathway cell wall biogenesis; peptidoglycan biosynthesis. Functionally, cell wall formation. This chain is UDP-N-acetylmuramate--L-alanine ligase, found in Colwellia psychrerythraea (strain 34H / ATCC BAA-681) (Vibrio psychroerythus).